The primary structure comprises 88 residues: Small ribosomal subunit protein bS20 (88 aa).

Residues 1–10 (MANHKSSLKR) show a composition bias toward basic residues. Residues 1–24 (MANHKSSLKRAKQDIVRNTRNKSR) form a disordered region.

The protein belongs to the bacterial ribosomal protein bS20 family.

Its function is as follows. Binds directly to 16S ribosomal RNA. The sequence is that of Small ribosomal subunit protein bS20 from Desulfosudis oleivorans (strain DSM 6200 / JCM 39069 / Hxd3) (Desulfococcus oleovorans).